The sequence spans 351 residues: SH3 domain-containing protein 3 (351 aa).

Coiled coils occupy residues 1 to 21 (MDAF…QQLA) and 193 to 213 (LQLA…LGKE). Residues 31–267 (YESSDVMVID…MVTEKQHKES (237 aa)) form the BAR domain. The region spanning 281-340 (TSYFLAEVIHPFSAASEKELDLDKGDYIVVRKVSQTGWAEGECKGKAGWFPMAYIEKRQR) is the SH3 domain.

As to quaternary structure, interacts with FREE1. Interacts (via SH3 domain) with DRP2A/ADL6. Binds to SH3P2. Detected in all tissues except seedlings.

The protein localises to the cytoplasmic vesicle. The protein resides in the clathrin-coated vesicle. In terms of biological role, may be involved in the recruitment of DRP2A to the accessory protein complex and in the negative regulation of its GTPase activity. This Arabidopsis thaliana (Mouse-ear cress) protein is SH3 domain-containing protein 3.